The following is a 155-amino-acid chain: FUN14 domain-containing protein 1 (155 aa).

The Cytoplasmic segment spans residues 1-47 (MATRNPPPQDYESDDDSYEVLDLTEYARRHQWWNRVFGHSSGPMVEK). A Phosphoserine; by CK2 modification is found at Ser-13. A Phosphoserine; by ULK1 modification is found at Ser-17. Tyr-18 carries the phosphotyrosine; by SRC modification. Positions 18–21 (YEVL) match the YXXL motif. Residues 48 to 68 (YSVATQIVMGGVTGWCAGFLF) form a helical membrane-spanning segment. Residues 69–74 (QKVGKL) lie on the Mitochondrial intermembrane side of the membrane. The helical transmembrane segment at 75–95 (AATAVGGGFLLLQIASHSGYV) threads the bilayer. At 96-133 (QIDWKRVEKDVNKAKRQIKKRANKAAPEINNLIEEATE) the chain is on the cytoplasmic side. Lys-119 participates in a covalent cross-link: Glycyl lysine isopeptide (Lys-Gly) (interchain with G-Cter in ubiquitin). A helical transmembrane segment spans residues 134–154 (FIKQNIVISSGFVGGFLLGLA). Residue Ser-155 is a topological domain, mitochondrial intermembrane.

It belongs to the FUN14 family. Interacts (via YXXL motif) with MAP1 LC3 family proteins MAP1LC3A, MAP1LC3B and GABARAP. Interacts with DNM1L/DPR1. Interacts with GPX4. Phosphorylation at Ser-13 by CK2 and at Tyr-18 by SRC inhibits activation of mitophagy. Following hypoxia, dephosphorylated at Tyr-18, leading to interaction with MAP1 LC3 family proteins and triggering mitophagy. Dephosphorylation is mediated by PGAM5. Phosphorylated by ULK1 at Ser-17 which enhances FUNDC1 binding to LC3. In terms of processing, ubiquitinated on Lys-119. Deubiquitinated by USP19; leading to hypoxia-induced DRP1 oligomerization and GTPase activity. Widely expressed.

It localises to the mitochondrion outer membrane. Functionally, integral mitochondrial outer-membrane protein that mediates the formation of mitochondria-associated endoplasmic reticulum membranes (MAMs). In turn, mediates angiogenesis and neoangiogenesis through interference with intracellular Ca(2+) communication and regulation of the vascular endothelial growth factor receptor KDR/VEGFR2 expression at both mRNA and protein levels. Also acts as an activator of hypoxia-induced mitophagy, an important mechanism for mitochondrial quality and homeostasis, by interacting with and recruiting LC3 protein family to mitochondria. Mechanistically, recruits DRP1 at ER-mitochondria contact sites leading to DRP1 oligomerization and GTPase activity to facilitate mitochondrial fission during hypoxia. Additionally, plays a role in hepatic ferroptosis by interacting directly with glutathione peroxidase/GPX4 to facilitate its recruitment into mitochondria through TOM/TIM complex where it is degraded by mitophagy. The polypeptide is FUN14 domain-containing protein 1 (FUNDC1) (Homo sapiens (Human)).